The primary structure comprises 703 residues: Cyclic AMP-dependent transcription factor ATF-6 beta (703 aa).

Alanine 2 bears the N-acetylalanine mark. Residues 2–86 are transcription activation; the sequence is AELMLLSEIA…ELLPIFPDLQ (85 aa). At 2 to 396 the chain is on the cytoplasmic side; sequence AELMLLSEIA…ELKLGSGNRK (395 aa). 3 disordered regions span residues 87–114, 229–248, and 293–317; these read VKSEPSSPCSSSSLSSESSRLSTEPSSE, LDGSSGKALPTRKPPLQPKP, and EGPAPSLPRPERKSIVPAPMPGNSC. Residues 89 to 114 are compositionally biased toward low complexity; that stretch reads SEPSSPCSSSSLSSESSRLSTEPSSE. Residues 325 to 388 form the bZIP domain; it reads LLKRQQRMIK…EALLAENSEL (64 aa). Positions 327–347 are basic motif; that stretch reads KRQQRMIKNRESACQSRRKKK. Residues 350-357 are leucine-zipper; sequence LQGLEARL. A helical; Signal-anchor for type II membrane protein transmembrane segment spans residues 397 to 417; that stretch reads VVCIMVFLLFIAFNFGPVSIS. Over 418–703 the chain is Lumenal; sequence EPPSAPISPR…SHQPLYLNHP (286 aa). A disordered region spans residues 447–479; sequence PVQGVEPLQGSSQGPKEPQPSPTDQPSFSNLTA. N-linked (GlcNAc...) asparagine glycans are attached at residues asparagine 476 and asparagine 505. Residues 521-565 are disordered; it reads QRHQRGRRKIPQRAQERQKSQPRKKSPPVKAVPIQPPGPPERDSV. A compositionally biased stretch (basic residues) spans 522 to 531; the sequence is RHQRGRRKIP. Asparagine 610, asparagine 627, and asparagine 676 each carry an N-linked (GlcNAc...) asparagine glycan. The segment covering 660–676 has biased composition (polar residues); the sequence is STVPPSLRKQPSPTPGN. Residues 660–703 form a disordered region; it reads STVPPSLRKQPSPTPGNATGGPLPVSAASQAHQASHQPLYLNHP. Over residues 685–696 the composition is skewed to low complexity; sequence SAASQAHQASHQ.

This sequence belongs to the bZIP family. ATF subfamily. In terms of assembly, homodimer and heterodimer with ATF6-alpha. The dimer interacts with the nuclear transcription factor Y (NF-Y) trimer through direct binding to NF-Y subunit C (NF-YC). Post-translationally, N-glycosylated. In terms of processing, during unfolded protein response, a fragment of approximately 60 kDa containing the cytoplasmic transcription factor domain is released by proteolysis. The cleavage is probably performed sequentially by site-1 (MBTPS1, S1P) and site-2 (MBTPS2, S2P) proteases. As to expression, ubiquitous.

Its subcellular location is the endoplasmic reticulum membrane. It localises to the nucleus. In terms of biological role, precursor of the transcription factor form (Processed cyclic AMP-dependent transcription factor ATF-6 beta), which is embedded in the endoplasmic reticulum membrane. Endoplasmic reticulum stress promotes processing of this form, releasing the transcription factor form that translocates into the nucleus, where it activates transcription of genes involved in the unfolded protein response (UPR). Transcription factor that acts in the unfolded protein response (UPR) pathway by activating UPR target genes induced during ER stress. Binds DNA on the 5'-CCAC[GA]-3' half of the ER stress response element (ERSE) (5'-CCAATN(9)CCAC[GA]-3') when NF-Y is bound to ERSE. In Homo sapiens (Human), this protein is Cyclic AMP-dependent transcription factor ATF-6 beta (ATF6B).